The following is a 409-amino-acid chain: Peptide chain release factor subunit 1 (409 aa).

It belongs to the eukaryotic release factor 1 family. As to quaternary structure, heterodimer of two subunits, one of which binds GTP.

The protein resides in the cytoplasm. In terms of biological role, directs the termination of nascent peptide synthesis (translation) in response to the termination codons UAA, UAG and UGA. This is Peptide chain release factor subunit 1 from Methanopyrus kandleri (strain AV19 / DSM 6324 / JCM 9639 / NBRC 100938).